The primary structure comprises 220 residues: Probable GTP-binding protein EngB (220 aa).

In terms of domain architecture, EngB-type G spans 26–200 (EGIEIAFAGR…RAKLDEWYAP (175 aa)). GTP is bound by residues 34 to 41 (GRSNAGKS), 61 to 65 (GRTQL), 79 to 82 (DLPG), 146 to 149 (TKAD), and 179 to 181 (FSS). Mg(2+) contacts are provided by serine 41 and threonine 63.

Belongs to the TRAFAC class TrmE-Era-EngA-EngB-Septin-like GTPase superfamily. EngB GTPase family. It depends on Mg(2+) as a cofactor.

In terms of biological role, necessary for normal cell division and for the maintenance of normal septation. In Vibrio cholerae serotype O1 (strain ATCC 39315 / El Tor Inaba N16961), this protein is Probable GTP-binding protein EngB.